Consider the following 288-residue polypeptide: Small ribosomal subunit protein uS2 (288 aa).

Residues 255–288 (ANNRDHKNNKNNSTIDNAENLKEENLVGGSNNES) are disordered.

Belongs to the universal ribosomal protein uS2 family.

In Ehrlichia chaffeensis (strain ATCC CRL-10679 / Arkansas), this protein is Small ribosomal subunit protein uS2.